A 340-amino-acid chain; its full sequence is Nuclear transcription factor Y subunit A-3 (340 aa).

The disordered stretch occupies residues 43–116 (SLSLKVDSRP…KGFASNPKQG (74 aa)). Residues 60 to 77 (QISFQDQDSSSTQSTGQS) are compositionally biased toward low complexity. Positions 78 to 103 (YTEVASSGDDNPSRQISFSAKSGSEI) are enriched in polar residues. A Subunit association domain (SAD) motif is present at residues 182-205 (FVNAKQYHAIMRRRQQRAKLEAQN). Positions 212-237 (KPYLHESRHVHALKRPRGSGGRFLNT) form a DNA-binding region, NFYA/HAP2-type.

It belongs to the NFYA/HAP2 subunit family. In terms of assembly, heterotrimeric transcription factor composed of three components, NF-YA, NF-YB and NF-YC. NF-YB and NF-YC must interact and dimerize for NF-YA association and DNA binding. As to expression, ubiquitous.

The protein localises to the nucleus. In terms of biological role, stimulates the transcription of various genes by recognizing and binding to a CCAAT motif in promoters. The sequence is that of Nuclear transcription factor Y subunit A-3 (NFYA3) from Arabidopsis thaliana (Mouse-ear cress).